The primary structure comprises 403 residues: 8-amino-7-oxononanoate synthase (403 aa).

Arg30 contributes to the substrate binding site. Residue 121–122 (GY) coordinates pyridoxal 5'-phosphate. A substrate-binding site is contributed by His146. Residues Ser192, His220, and Thr248 each coordinate pyridoxal 5'-phosphate. Lys251 carries the post-translational modification N6-(pyridoxal phosphate)lysine. Thr367 contributes to the substrate binding site.

The protein belongs to the class-II pyridoxal-phosphate-dependent aminotransferase family. BioF subfamily. As to quaternary structure, homodimer. It depends on pyridoxal 5'-phosphate as a cofactor.

It carries out the reaction 6-carboxyhexanoyl-[ACP] + L-alanine + H(+) = (8S)-8-amino-7-oxononanoate + holo-[ACP] + CO2. It participates in cofactor biosynthesis; biotin biosynthesis. Its function is as follows. Catalyzes the decarboxylative condensation of pimeloyl-[acyl-carrier protein] and L-alanine to produce 8-amino-7-oxononanoate (AON), [acyl-carrier protein], and carbon dioxide. The sequence is that of 8-amino-7-oxononanoate synthase from Burkholderia vietnamiensis (strain G4 / LMG 22486) (Burkholderia cepacia (strain R1808)).